A 193-amino-acid polypeptide reads, in one-letter code: Flagellin B1 (193 aa).

The propeptide occupies 1-12 (MFEFITDEDERG).

This sequence belongs to the archaeal flagellin family. In terms of processing, glycosylated.

The protein localises to the archaeal flagellum. Flagellin is the subunit protein which polymerizes to form the filaments of archaeal flagella. The protein is Flagellin B1 (flaB1) of Halobacterium salinarum (strain ATCC 700922 / JCM 11081 / NRC-1) (Halobacterium halobium).